A 1849-amino-acid chain; its full sequence is Brefeldin A-inhibited guanine nucleotide-exchange protein 1 (1849 aa).

The tract at residues 2-224 (YEGKKTKNMF…QEAKQMEKER (223 aa)) is DCB; DCB:DCB domain and DCB:HUS domain interaction. Positions 46–58 (AETEKQSPPHGEA) are enriched in basic and acidic residues. Disordered regions lie at residues 46-65 (AETEKQSPPHGEAKAGSSTL), 216-248 (EAKQMEKERHRQHHHLLQSPVSHHEPESPQLRY), 267-302 (LHTNDVDKSLQDDTEPENGSDISSAENEQTEADQAT), and 378-413 (TPISVAYTPSLPDDRLSVSSNDTQESGNSSGPSPGA). S52 carries the phosphoserine modification. The segment covering 267–277 (LHTNDVDKSLQ) has biased composition (basic and acidic residues). A phosphoserine mark is found at S286, S289, S290, S397, and S410. Over residues 394–409 (SVSSNDTQESGNSSGP) the composition is skewed to polar residues. The tract at residues 557–577 (ADAQSVVDIYVNYDCDLNAAN) is HUS; DCB:HUS domain interaction. The 132-residue stretch at 709–840 (FNKKPKRGIQ…IIMLTTDLHS (132 aa)) folds into the SEC7 domain. The Nuclear localization signal (NLS) signature appears at 711–715 (KKPKR). Position 1079 is a phosphoserine (S1079). A disordered region spans residues 1543–1562 (RPNSGETAPPPPSPVSEKPL). Residues S1566 and S1569 each carry the phosphoserine modification.

In terms of assembly, homodimer. Interacts with ARFGEF2/BIG2; both proteins are probably part of the same or very similar macromolecular complexes. Interacts with FKBP2. Interacts with MYO9B. Interacts with PRKAR1A and PRKAR2A. Interacts with PPP1CC. Interacts with NCL, FBL, NUP62 and U3 small nucleolar RNA. Interacts with DPY30. Interacts with PDE3A. Interacts with KANK1. Interacts with TBC1D22A and TBC1D22B. Interacts (via N-terminus) with ARL1. Post-translationally, phosphorylated. In vitro phosphorylated by PKA reducing its GEF activity and dephosphorylated by phosphatase PP1. As to expression, expressed in placenta, lung, heart, brain, kidney and pancreas.

It localises to the cytoplasm. The protein localises to the perinuclear region. Its subcellular location is the golgi apparatus. It is found in the trans-Golgi network membrane. The protein resides in the nucleus. It localises to the nucleolus. The protein localises to the nucleus matrix. Its activity is regulated as follows. Inhibited by brefeldin A. Functionally, promotes guanine-nucleotide exchange on ARF1 and ARF3. Promotes the activation of ARF1/ARF3 through replacement of GDP with GTP. Involved in vesicular trafficking. Required for the maintenance of Golgi structure; the function may be independent of its GEF activity. Required for the maturation of integrin beta-1 in the Golgi. Involved in the establishment and persistence of cell polarity during directed cell movement in wound healing. Proposed to act as A kinase-anchoring protein (AKAP) and may mediate crosstalk between Arf and PKA pathways. Inhibits GAP activity of MYO9B probably through competitive RhoA binding. The function in the nucleus remains to be determined. The sequence is that of Brefeldin A-inhibited guanine nucleotide-exchange protein 1 (ARFGEF1) from Homo sapiens (Human).